A 456-amino-acid chain; its full sequence is Glycerol-3-phosphate dehydrogenase [NAD(+)] At3g07690, cytosolic (456 aa).

NAD(+) contacts are provided by residues 41-46 (GAGAWG), Lys-189, and Ala-228. Lys-189 is a substrate binding site. Residue Lys-278 is the Proton acceptor of the active site. Residues Arg-340 and Gln-368 each contribute to the NAD(+) site. 340–341 (RN) is a substrate binding site.

The protein belongs to the NAD-dependent glycerol-3-phosphate dehydrogenase family. Homodimer.

It localises to the cytoplasm. It catalyses the reaction sn-glycerol 3-phosphate + NAD(+) = dihydroxyacetone phosphate + NADH + H(+). Its function is as follows. Required for glycerol-3-phosphate (G3P) accumulation during systemic acquired resistance (SAR) establishment. This is Glycerol-3-phosphate dehydrogenase [NAD(+)] At3g07690, cytosolic from Arabidopsis thaliana (Mouse-ear cress).